The following is a 75-amino-acid chain: UPF0512 protein C (75 aa).

This sequence belongs to the UPF0512 family.

The polypeptide is UPF0512 protein C (Dictyostelium discoideum (Social amoeba)).